A 92-amino-acid polypeptide reads, in one-letter code: Acylphosphatase (92 aa).

Residues 5 to 92 (RWHLLVSGKV…QEFTDFRTTH (88 aa)) enclose the Acylphosphatase-like domain. Residues arginine 20 and asparagine 38 contribute to the active site.

This sequence belongs to the acylphosphatase family.

The enzyme catalyses an acyl phosphate + H2O = a carboxylate + phosphate + H(+). The polypeptide is Acylphosphatase (acyP) (Marinobacter nauticus (strain ATCC 700491 / DSM 11845 / VT8) (Marinobacter aquaeolei)).